Consider the following 72-residue polypeptide: Protein kish-A (72 aa).

An N-terminal signal peptide occupies residues 1 to 26; it reads MSAIFNFQSLLTVILLLICTCAYIRS. Over 27 to 53 the chain is Extracellular; that stretch reads LAPSLLDKNKTGLLGIFWKCARIGERK. Residue N35 is glycosylated (N-linked (GlcNAc...) asparagine). Residues 54-71 traverse the membrane as a helical segment; the sequence is SPYVAVCCVVMAFSILFV. Position 72 (Q72) is a topological domain, cytoplasmic.

This sequence belongs to the KISH family.

The protein localises to the golgi apparatus membrane. Functionally, involved in the early part of the secretory pathway. This chain is Protein kish-A (TMEM167A), found in Gallus gallus (Chicken).